We begin with the raw amino-acid sequence, 394 residues long: Alanine racemase 2 (394 aa).

The Proton acceptor; specific for D-alanine role is filled by Lys-39. At Lys-39 the chain carries N6-(pyridoxal phosphate)lysine. Arg-139 contacts substrate. Tyr-272 serves as the catalytic Proton acceptor; specific for L-alanine. Residue Met-320 participates in substrate binding.

The protein belongs to the alanine racemase family. The cofactor is pyridoxal 5'-phosphate.

It carries out the reaction L-alanine = D-alanine. It functions in the pathway amino-acid biosynthesis; D-alanine biosynthesis; D-alanine from L-alanine: step 1/1. Functionally, catalyzes the interconversion of L-alanine and D-alanine. May also act on other amino acids. The protein is Alanine racemase 2 (alr2) of Bacillus subtilis (strain 168).